Here is a 2346-residue protein sequence, read N- to C-terminus: Nucleoprotein TPR (2346 aa).

4 coiled-coil regions span residues 38–190 (DEYC…HKEI), 217–366 (QLQS…NLES), 395–493 (YAKS…SRQV), and 565–596 (KMLLEQSKNHIRKLDARFAELEDLLTQKNNTV). The segment at 622 to 649 (VDLDDSNLEPNDSALDTSEQPAANFEES) is disordered. Over residues 629-642 (LEPNDSALDTSEQP) the composition is skewed to polar residues. 2 coiled-coil regions span residues 643 to 1158 (AANF…IEAL) and 1196 to 1247 (EEGR…DELN). The interval 1187–1655 (LNASGLTAAE…SPRTANVKPM (469 aa)) is interacts with Mad1. Residues Thr-1259, Thr-1302, Thr-1338, and Thr-1390 each carry the phosphothreonine modification. Coiled coils occupy residues 1281-1536 (TDSN…KRTE) and 1579-1627 (SYDE…GSQQ). Composition is skewed to polar residues over residues 1621–1649 (RQLGSQQSTKPSTSSVAEKGNISESSPRT) and 1657–1667 (GSATVQQSATV). 3 disordered regions span residues 1621-1677 (RQLG…ETPL), 1695-1768 (PTSQ…YMPS), and 1821-2346 (SPRV…GRFP). Positions 1702-1722 (AGSSTSTSSSSSSSSTSTTSA) are enriched in low complexity. Residues 1738-1747 (PQQQVHTTGS) are compositionally biased toward polar residues. 2 stretches are compositionally biased toward low complexity: residues 1752–1761 (SMASSSPTSS) and 1827–1878 (SSSS…PSSS). Positions 1879–1891 (NVTTTQAGCSSQG) are enriched in polar residues. Over residues 1953–2023 (QEDDIQVVDS…QDNNEVDIEV (71 aa)) the composition is skewed to acidic residues. A compositionally biased stretch (polar residues) spans 2028–2080 (MQAQEESQSLDNQAIATASASTQENNQSQAITSGSGESSNPVTLPQAEASNWK). The segment covering 2082–2091 (AAASTSTAAA) has biased composition (low complexity). Polar residues-rich tracts occupy residues 2097–2110 (SVEIVSSPQVSNFC) and 2142–2159 (GAASASSPQKQSEAGESS). Positions 2165-2184 (KAADDGGDHADGTDNAREAD) are enriched in basic and acidic residues. Composition is skewed to polar residues over residues 2193 to 2223 (ATGQGEDSQPLGNDNPNVGTSQSEVSHNQAN) and 2302 to 2322 (RDTSPGNIQQNQMSANNNRFA). The span at 2323 to 2332 (QRTRNRRPIR) shows a compositional bias: basic residues.

This sequence belongs to the TPR family. In terms of assembly, part of the nuclear pore complex (NPC). Associates with male-specific lethal (MSL) histone acetyltransferase complex. Interacts with Mad2; the interaction is required for efficient recruitment of Mad2 to unattached kinetochore and occurs in a microtubule-independent manner. Interacts with Mad1 (N-terminus). Interacts with Chro, east and Asator; the interaction is part of a macromolecular complex forming the spindle matrix during mitosis. Interacts with Nup98. In males, interacts with histone acetyltransferase mof. In terms of processing, mps1-mediated phosphorylation disrupts interaction with Mad1 during mitosis. As to expression, expressed in salivary glands, fat body, tracheal tube, esophageal tube and anterior ejaculatory duct (at protein level).

It is found in the nucleus. The protein localises to the nucleus matrix. The protein resides in the nucleus lamina. It localises to the nucleus envelope. Its subcellular location is the nucleus membrane. It is found in the nuclear pore complex. The protein localises to the cytoplasm. The protein resides in the cytoskeleton. It localises to the spindle. Its subcellular location is the chromosome. It is found in the centromere. The protein localises to the kinetochore. The protein resides in the midbody. In terms of biological role, component of the nuclear pore complex (NPC), a complex required for the trafficking across the nuclear envelope. Functions as a scaffolding element in the nuclear phase of the NPC. Plays a role in chromosomal organization and gene expression regulation; stimulates transcription by promoting the formation of an open chromatin environment. Binds chromatin to nucleoporin-associated regions (NARs) that define transcriptionally active regions of the genome. Associates with extended chromosomal regions that alternate between domains of high density binding with those of low occupancy. Preferentially binds to NARs of the male X chromosome. In males, together with Nup153, required for the localization of the male-specific lethal (MSL) histone acetyltransferase complex to the X chromosome and therefore for the transcription of dosage compensation genes. In males, restrains dosage-compensated expression at the level of nascent transcription probably by interacting with the MSL complex and by modulating RNA Polymerase II phosphorylation status and activity. During mitosis forms a gel-like spindle matrix complex together with Skeletor (Skel), Chro, east, and Asator embedding the microtubule spindle apparatus. During interphase localizes Mad1 to the nuclear pore complex and thereby might act as a scaffold to assemble the Mad1-C-Mad2 complex, a heterotetramer that catalyzes the structural conversion of open-Mad2 (O-Mad2) into closed-Mad2 (C-Mad2) which is essential for spindle-assembly checkpoint (SAC). During the metaphase-anaphase transition and before chromosome congression, is phosphorylated by Msp-1; this modification releases Mad1 from the nuclear pore complex and thereby promotes assembly of SAC ensuring a timely and effective recruitment of spindle checkpoint proteins like Mad1, Mad2 and Mps1 to unattached kinetochores (KT). In testes, has a role in stem cell asymmetric division and maintenance via regulation of mitotic spindle assembly checkpoint (SAC) complex. The polypeptide is Nucleoprotein TPR (Drosophila melanogaster (Fruit fly)).